The primary structure comprises 217 residues: Meiotically up-regulated gene 37 protein (217 aa).

Functionally, has a role in meiosis. This chain is Meiotically up-regulated gene 37 protein (mug37), found in Schizosaccharomyces pombe (strain 972 / ATCC 24843) (Fission yeast).